The sequence spans 72 residues: Large ribosomal subunit protein uL29 (72 aa).

Belongs to the universal ribosomal protein uL29 family.

The chain is Large ribosomal subunit protein uL29 from Prochlorococcus marinus subsp. pastoris (strain CCMP1986 / NIES-2087 / MED4).